We begin with the raw amino-acid sequence, 83 residues long: uncharacterized protein (83 aa).

The segment at 58 to 83 is disordered; it reads EHGHDDEYDEFSDPNAWVPRRSRDTG.

This is an uncharacterized protein from Mycobacterium tuberculosis (strain CDC 1551 / Oshkosh).